We begin with the raw amino-acid sequence, 355 residues long: C-C chemokine receptor type 3 (355 aa).

Over 1 to 34 (MTTSLDTVETFGPTSYDDDMGLLCEKADVGALIA) the chain is Extracellular. Residues 35–62 (QFVPPLYSLVFMVGLLGNVVVVMILIKY) traverse the membrane as a helical segment. Residues 63 to 72 (RRLRIMTNIY) are Cytoplasmic-facing. A helical transmembrane segment spans residues 73–93 (LLNLAISDLLFLFTLPFWIHY). Topologically, residues 94 to 107 (VRERNWVFSHGMCK) are extracellular. Residues C106 and C183 are joined by a disulfide bond. A helical transmembrane segment spans residues 108–129 (VLSGFYHTGLYSEIFFIILLTI). The Cytoplasmic portion of the chain corresponds to 130 to 146 (DRYLAIVHAVFALRART). The chain crosses the membrane as a helical span at residues 147–171 (VTFGVVTSIVTWGLAVLAALPEFIF). Over 172 to 203 (YGTEELFPETLCSAIYPQDTVYSWRHFHTLRM) the chain is Extracellular. The chain crosses the membrane as a helical span at residues 204–223 (TILCLALPLLVMAICYTGII). Residues 224–239 (KTLLRCPSKKKYKAIR) are Cytoplasmic-facing. A helical membrane pass occupies residues 240–264 (LIFVIMAVFFIFWTPYNVAILISTY). Residues 265-281 (QSILFGPDCERSKHLDL) are Extracellular-facing. The chain crosses the membrane as a helical span at residues 282–305 (FVLVTEVIAYSHCWVNPVIYAFVG). Residues 306–355 (ERFRKYLRHFFHRHVLMHPGKYIPFLPSEKLERTSSVSPSTAEPELSIVF) lie on the Cytoplasmic side of the membrane.

It belongs to the G-protein coupled receptor 1 family.

It is found in the cell membrane. In terms of biological role, receptor for C-C type chemokine. Binds and responds to a variety of chemokines, including CCL11, CCL26, CCL7, CCL13, RANTES(CCL5) and CCL15. Subsequently transduces a signal by increasing the intracellular calcium ions level. In addition acts as a possible functional receptor for NARS1. In Macaca fascicularis (Crab-eating macaque), this protein is C-C chemokine receptor type 3 (CCR3).